Consider the following 415-residue polypeptide: NPL4-like protein (415 aa).

The MPN domain maps to 130–279; the sequence is AASFDRDSAN…FEAFQMSEIC (150 aa).

The protein belongs to the NPL4 family.

The protein localises to the endoplasmic reticulum. It participates in protein degradation; proteasomal ubiquitin-dependent pathway. In terms of biological role, may be part of a complex that binds ubiquitinated proteins and that is necessary for the export of misfolded proteins from the ER to the cytoplasm, where they are degraded by the proteasome. The sequence is that of NPL4-like protein from Oryza sativa subsp. japonica (Rice).